Reading from the N-terminus, the 123-residue chain is UPF0102 protein CLD_2200 (123 aa).

Belongs to the UPF0102 family.

In Clostridium botulinum (strain Okra / Type B1), this protein is UPF0102 protein CLD_2200.